The primary structure comprises 498 residues: ATP synthase subunit beta, chloroplastic (498 aa).

Residue 172 to 179 (GGAGVGKT) coordinates ATP.

Belongs to the ATPase alpha/beta chains family. As to quaternary structure, F-type ATPases have 2 components, CF(1) - the catalytic core - and CF(0) - the membrane proton channel. CF(1) has five subunits: alpha(3), beta(3), gamma(1), delta(1), epsilon(1). CF(0) has four main subunits: a(1), b(1), b'(1) and c(9-12).

It localises to the plastid. The protein resides in the chloroplast thylakoid membrane. The catalysed reaction is ATP + H2O + 4 H(+)(in) = ADP + phosphate + 5 H(+)(out). In terms of biological role, produces ATP from ADP in the presence of a proton gradient across the membrane. The catalytic sites are hosted primarily by the beta subunits. The sequence is that of ATP synthase subunit beta, chloroplastic from Nypa fruticans (Nypa palm).